The following is a 66-amino-acid chain: Sec-independent protein translocase protein TatA (66 aa).

A helical transmembrane segment spans residues 1–21 (MSIGIWQIAIVVILVVLLFGR). Residues 43-66 (ATDITDEPEPKNVSENNQDSKDKE) form a disordered region. Positions 50 to 66 (PEPKNVSENNQDSKDKE) are enriched in basic and acidic residues.

The protein belongs to the TatA/E family. The Tat system comprises two distinct complexes: a TatABC complex, containing multiple copies of TatA, TatB and TatC subunits, and a separate TatA complex, containing only TatA subunits. Substrates initially bind to the TatABC complex, which probably triggers association of the separate TatA complex to form the active translocon.

The protein localises to the cell inner membrane. Functionally, part of the twin-arginine translocation (Tat) system that transports large folded proteins containing a characteristic twin-arginine motif in their signal peptide across membranes. TatA could form the protein-conducting channel of the Tat system. The chain is Sec-independent protein translocase protein TatA from Pelagibacter ubique (strain HTCC1062).